Consider the following 367-residue polypeptide: Indole glucosinolate O-methyltransferase 5 (367 aa).

Residues glycine 209, aspartate 232, aspartate 252, methionine 253, and lysine 266 each coordinate S-adenosyl-L-homocysteine. Histidine 270 serves as the catalytic Proton acceptor.

This sequence belongs to the class I-like SAM-binding methyltransferase superfamily. Cation-independent O-methyltransferase family.

It participates in secondary metabolite biosynthesis. Functionally, involved in indole glucosinolate biosynthesis. Catalyzes methoxylation reactions of the glucosinolate indole ring. Converts the hydroxy intermediates 4-hydroxy-indol-3-yl-methylglucosinolate (4OH-I3M) and 1-hydroxy-indol-3-yl-methylglucosinolate (1OH-I3M) to 4-methoxy-indol-3-yl-methylglucosinolate (4MO-I3M) and 1-methoxy-indol-3-yl-methylglucosinolate, respectively. In Arabidopsis thaliana (Mouse-ear cress), this protein is Indole glucosinolate O-methyltransferase 5.